The chain runs to 172 residues: Stellate protein CG33239/CG33241 (172 aa).

This sequence belongs to the casein kinase 2 subunit beta family. Interacts in vitro with the casein kinase 2 alpha subunit (CkII-alpha). The relevance of such interaction is however unclear in vivo. Probably not expressed in wild-type flies. In males lacking the Y chromosome, it is testis-specific and constitutes the main component of star-shaped crystals.

Unknown. In males lacking the Y chromosome, its strong overexpression leads to the appearance of proteinaceous star-shaped crystals in the primary spermatocytes causing meiotic drive, possibly by interfering with normal casein kinase 2 activity. The polypeptide is Stellate protein CG33239/CG33241 (Ste:CG33239) (Drosophila melanogaster (Fruit fly)).